The following is a 674-amino-acid chain: Acyl-coenzyme A oxidase acox-1.1 (674 aa).

FAD is bound by residues 149-152 (YAQT), 157-158 (GT), and glycine 191. Residues 285 to 288 (KINY) and arginine 295 each bind substrate. FAD-binding positions include arginine 320 and 340–343 (QQHR). 4 residues coordinate ATP: histidine 342, serine 392, histidine 396, and glutamine 404. Glycine 411 is an FAD binding site. 433 to 434 (YE) lines the substrate pocket. Residue glutamate 434 is the Proton acceptor of the active site. Glutamate 436 serves as a coordination point for FAD. ATP contacts are provided by residues 533 to 536 (RASR) and tyrosine 581. A Microbody targeting signal motif is present at residues 672–674 (SKL).

Belongs to the acyl-CoA oxidase family. As to quaternary structure, homodimer. Forms a heterodimer with acox-1.2. Forms a heterodimer with acox-1.3; the interaction may be important for the stability of acox-1.3. The cofactor is FAD. As to expression, expressed in hypodermis and intestine.

The protein localises to the peroxisome. The enzyme catalyses nonanoyl-CoA + O2 = (2E)-nonenoyl-CoA + H2O2. It catalyses the reaction dodecanoyl-CoA + O2 = (2E)-dodecenoyl-CoA + H2O2. The catalysed reaction is a 2,3-saturated acyl-CoA + O2 = a (2E)-enoyl-CoA + H2O2. It carries out the reaction heptanoyl-CoA + O2 = (2E)-heptenoyl-CoA + H2O2. The enzyme catalyses (8R)-8-hydroxynonanoyl-CoA + O2 = (2E,8R)-8-hydroxynonenoyl-CoA + H2O2. It catalyses the reaction pentanoyl-CoA + O2 = (2E)-pentenoyl-CoA + H2O2. The catalysed reaction is hexadecanoyl-CoA + O2 = (2E)-hexadecenoyl-CoA + H2O2. It carries out the reaction IC-asc-C7-CoA + O2 = IC-asc-DeltaC7-CoA + H2O2. The enzyme catalyses IC-asc-C9-CoA + O2 = IC-asc-DeltaC9-CoA + H2O2. It catalyses the reaction asc-omegaC5-CoA + O2 = asc-omegaDeltaC5-CoA + H2O2. The catalysed reaction is asc-C7-CoA + O2 = asc-DeltaC7-CoA + H2O2. It carries out the reaction asc-omegaC7-CoA + O2 = asc-omegaDeltaC7-CoA + H2O2. The enzyme catalyses asc-C9-CoA + O2 = asc-DeltaC9-CoA + H2O2. It catalyses the reaction asc-C13-CoA + O2 = asc-DeltaC13-CoA + H2O2. It participates in lipid metabolism; peroxisomal fatty acid beta-oxidation. Its activity is regulated as follows. Activated by ATP. ATP binding leads to a conformational change that promotes FAD cofactor binding and enzyme activity. ATP binding likely occurs during acox-1.1 folding and/or dimer formation. Its function is as follows. Involved in the first step of peroxisomal beta-oxidation by catalyzing the desaturation of fatty acid-derived side chains. Specifically, catalyzes the desaturation of fatty acids heptanoyl-CoA (C7), nonanoyl-CoA (C9), dodecanoyl-CoA (C12) and to a lesser extent pentanoyl-CoA (C5) and hexadecanoyl-CoA (C16), and hydroxylated fatty acid hydroxynonanoyl-CoA. Also, catalyzes the desaturation fatty acid-derived side chains of ascaroside pheromones, which regulates development and behavior. Specifically, shortens ascaroside with 5-carbon omega side chain (asc-omega-C5), 7-carbon side chain (asc-C7), 9-carbon side chain (asc-C9), 11-carbon side chain (asc-C11), 13-carbon side chain (asc-C13), 15-carbon side chain (asc-C15) and to a lesser extent ascarosides with 7-omega-carbon side chain (asc-omega-C7). Also shortens indol-3-carbonyl(IC)-ascarosides with 7-carbon side chain (IC-asc-C7) and to a lesser extent (IC)-ascarosides with 9-carbon side chain (IC-asc-C9). May associate and regulate the folding and/or the catalytic activity of other acyl-coenzyme A oxidases including acox-1.2, acox-1.3, acox-1.4 and acox-3 modulating the type of ascarosides produced. In association with acox-1.3, catalyzes the desaturation of asc-C7-CoA but not of fatty acids or hydroxylated fatty acids. Involved in the biosynthesis of asc-C6-MK (daumone 2) and asc-delta-C9 (daumone 3) but not asc-C7 (daumone 1); daumones are pheromones produced during unfavourable growth conditions which promote entry into the dauer stage. The chain is Acyl-coenzyme A oxidase acox-1.1 from Caenorhabditis elegans.